Here is a 328-residue protein sequence, read N- to C-terminus: DNA-directed RNA polymerase subunit alpha (328 aa).

The segment at 1 to 230 (MNKIKITPSV…QSQMEIFTND (230 aa)) is alpha N-terminal domain (alpha-NTD). An alpha C-terminal domain (alpha-CTD) region spans residues 243 to 328 (NSEIFYQPLD…ILKKIEQNKS (86 aa)).

Belongs to the RNA polymerase alpha chain family. In terms of assembly, homodimer. The RNAP catalytic core consists of 2 alpha, 1 beta, 1 beta' and 1 omega subunit. When a sigma factor is associated with the core the holoenzyme is formed, which can initiate transcription.

The catalysed reaction is RNA(n) + a ribonucleoside 5'-triphosphate = RNA(n+1) + diphosphate. Functionally, DNA-dependent RNA polymerase catalyzes the transcription of DNA into RNA using the four ribonucleoside triphosphates as substrates. The protein is DNA-directed RNA polymerase subunit alpha of Nitratiruptor sp. (strain SB155-2).